The chain runs to 160 residues: Transcription antitermination protein NusB (160 aa).

This sequence belongs to the NusB family.

Functionally, involved in transcription antitermination. Required for transcription of ribosomal RNA (rRNA) genes. Binds specifically to the boxA antiterminator sequence of the ribosomal RNA (rrn) operons. This chain is Transcription antitermination protein NusB, found in Rhizobium etli (strain ATCC 51251 / DSM 11541 / JCM 21823 / NBRC 15573 / CFN 42).